A 361-amino-acid chain; its full sequence is UDP-N-acetylglucosamine--N-acetylmuramyl-(pentapeptide) pyrophosphoryl-undecaprenol N-acetylglucosamine transferase (361 aa).

UDP-N-acetyl-alpha-D-glucosamine contacts are provided by residues T12–G14, N124, R163, S189, I241, A260–E265, and Q286.

Belongs to the glycosyltransferase 28 family. MurG subfamily.

It localises to the cell inner membrane. The catalysed reaction is di-trans,octa-cis-undecaprenyl diphospho-N-acetyl-alpha-D-muramoyl-L-alanyl-D-glutamyl-meso-2,6-diaminopimeloyl-D-alanyl-D-alanine + UDP-N-acetyl-alpha-D-glucosamine = di-trans,octa-cis-undecaprenyl diphospho-[N-acetyl-alpha-D-glucosaminyl-(1-&gt;4)]-N-acetyl-alpha-D-muramoyl-L-alanyl-D-glutamyl-meso-2,6-diaminopimeloyl-D-alanyl-D-alanine + UDP + H(+). Its pathway is cell wall biogenesis; peptidoglycan biosynthesis. Functionally, cell wall formation. Catalyzes the transfer of a GlcNAc subunit on undecaprenyl-pyrophosphoryl-MurNAc-pentapeptide (lipid intermediate I) to form undecaprenyl-pyrophosphoryl-MurNAc-(pentapeptide)GlcNAc (lipid intermediate II). The polypeptide is UDP-N-acetylglucosamine--N-acetylmuramyl-(pentapeptide) pyrophosphoryl-undecaprenol N-acetylglucosamine transferase (Aeromonas hydrophila subsp. hydrophila (strain ATCC 7966 / DSM 30187 / BCRC 13018 / CCUG 14551 / JCM 1027 / KCTC 2358 / NCIMB 9240 / NCTC 8049)).